The primary structure comprises 395 residues: Tryptophan synthase beta chain (395 aa).

Lys89 is modified (N6-(pyridoxal phosphate)lysine).

This sequence belongs to the TrpB family. As to quaternary structure, tetramer of two alpha and two beta chains. It depends on pyridoxal 5'-phosphate as a cofactor.

The catalysed reaction is (1S,2R)-1-C-(indol-3-yl)glycerol 3-phosphate + L-serine = D-glyceraldehyde 3-phosphate + L-tryptophan + H2O. It functions in the pathway amino-acid biosynthesis; L-tryptophan biosynthesis; L-tryptophan from chorismate: step 5/5. The beta subunit is responsible for the synthesis of L-tryptophan from indole and L-serine. The protein is Tryptophan synthase beta chain of Fusobacterium nucleatum subsp. nucleatum (strain ATCC 25586 / DSM 15643 / BCRC 10681 / CIP 101130 / JCM 8532 / KCTC 2640 / LMG 13131 / VPI 4355).